Here is a 286-residue protein sequence, read N- to C-terminus: Soluble epoxide hydrolase (286 aa).

Positions 26–123 (YPLVLLHGWP…DLVERLFILD (98 aa)) constitute an AB hydrolase-1 domain. D99 acts as the Nucleophile in catalysis. The active-site Proton donor is the Y209. H264 serves as the catalytic Proton acceptor.

It belongs to the AB hydrolase superfamily. Epoxide hydrolase family. As to quaternary structure, homotetramer.

The protein localises to the cytoplasm. Its subcellular location is the cell membrane. The enzyme catalyses an epoxide + H2O = an ethanediol. In terms of biological role, involved in catabolic degradation of epoxides. Shows highest activity towards C6 and C7 carbocyclic epoxides. Also active towards linear 1,2-epoxyalkanes. This Corynebacterium sp. (strain C12) protein is Soluble epoxide hydrolase.